The following is a 233-amino-acid chain: Bcl-2-like protein 1 (233 aa).

Positions serine 4 to tryptophan 24 match the BH4 motif. The tract at residues serine 28–histidine 71 is disordered. Serine 49 is subject to Phosphoserine; by PLK3. Serine 62 is modified (phosphoserine; by CDK1). The BH3 signature appears at valine 86–arginine 100. The BH1 motif lies at glutamate 129 to glycine 148. The BH2 signature appears at proline 180–tyrosine 195. A helical transmembrane segment spans residues phenylalanine 210–leucine 226.

Belongs to the Bcl-2 family. In terms of assembly, homodimer. Interacts with BCL2L11. Interacts with BAD. Interacts with PGAM5. Interacts with HEBP2. Interacts with p53/TP53 and BBC3; interaction with BBC3 disrupts the interaction with p53/TP53. Interacts with ATP5F1A and ATP5F1B; the interactions mediate the association of isoform Bcl-X(L) with the mitochondrial membrane ATP synthase F(1)F(0) ATP synthase. Interacts with VDAC1. Interacts with BCL2L11 (via BH3). Interacts with RNF183. Interacts with GIMAP3/IAN4 and GIMAP5/IAN5. Interacts with GIMAP5 and HSPA8/HSC70; the interaction between HSPA8 and BCL2L1 is impaired in the absence of GIMAP5. Interacts with isoform 4 of CLU; this interaction releases and activates BAX and promotes cell death. Forms heterodimers with BAX, BAK or BCL2; heterodimerization with BAX does not seem to be required for anti-apoptotic activity. Interacts with isoform 1 of SIVA1; the interaction inhibits the anti-apoptotic activity. Interacts with IKZF3. Interacts with RTL10/BOP. Interacts with DNM1L and CLTA; DNM1L and BCL2L1 isoform BCL-X(L) may form a complex in synaptic vesicles that also contains clathrin and MFF. Interacts (via the loop between motifs BH4 and BH3) with NLRP1 (via LRR repeats), but not with NLRP2, NLRP3, NLRP4, PYCARD, nor MEFV. Interacts with BECN1. In terms of processing, proteolytically cleaved by caspases during apoptosis. The cleaved protein, lacking the BH4 motif, has pro-apoptotic activity. Phosphorylated on Ser-62 by CDK1. This phosphorylation is partial in normal mitotic cells, but complete in G2-arrested cells upon DNA-damage, thus promoting subsequent apoptosis probably by triggering caspases-mediated proteolysis. Phosphorylated by PLK3, leading to regulate the G2 checkpoint and progression to cytokinesis during mitosis. Phosphorylation at Ser-49 appears during the S phase and G2, disappears rapidly in early mitosis during prometaphase, metaphase and early anaphase, and re-appears during telophase and cytokinesis. Post-translationally, ubiquitinated by RNF183 during prolonged ER stress, leading to degradation by the proteosome. As to expression, bcl-X(S) is expressed at high levels in cells that undergo a high rate of turnover, such as developing lymphocytes. In contrast, Bcl-X(L) is found in tissues containing long-lived postmitotic cells, such as adult brain.

The protein localises to the mitochondrion inner membrane. The protein resides in the mitochondrion outer membrane. It localises to the mitochondrion matrix. Its subcellular location is the cytoplasmic vesicle. It is found in the secretory vesicle. The protein localises to the synaptic vesicle membrane. The protein resides in the cytoplasm. It localises to the cytosol. Its subcellular location is the cytoskeleton. It is found in the microtubule organizing center. The protein localises to the centrosome. The protein resides in the nucleus membrane. Potent inhibitor of cell death. Inhibits activation of caspases. Appears to regulate cell death by blocking the voltage-dependent anion channel (VDAC) by binding to it and preventing the release of the caspase activator, CYC1, from the mitochondrial membrane. Also acts as a regulator of G2 checkpoint and progression to cytokinesis during mitosis. Functionally, isoform Bcl-X(L) also regulates presynaptic plasticity, including neurotransmitter release and recovery, number of axonal mitochondria as well as size and number of synaptic vesicle clusters. During synaptic stimulation, increases ATP availability from mitochondria through regulation of mitochondrial membrane ATP synthase F(1)F(0) activity and regulates endocytic vesicle retrieval in hippocampal neurons through association with DMN1L and stimulation of its GTPase activity in synaptic vesicles. May attenuate inflammation impairing NLRP1-inflammasome activation, hence CASP1 activation and IL1B release. In terms of biological role, isoform Bcl-X(S) promotes apoptosis. The protein is Bcl-2-like protein 1 (BCL2L1) of Homo sapiens (Human).